The sequence spans 180 residues: Large ribosomal subunit protein uL5c (180 aa).

It belongs to the universal ribosomal protein uL5 family. In terms of assembly, part of the 50S ribosomal subunit; contacts the 5S rRNA.

It localises to the plastid. The protein resides in the chloroplast. Functionally, binds 5S rRNA, forms part of the central protuberance of the 50S subunit. The sequence is that of Large ribosomal subunit protein uL5c (rpl5) from Chlorella vulgaris (Green alga).